Reading from the N-terminus, the 326-residue chain is Trans-L-3-hydroxyproline dehydratase (326 aa).

Cys80 acts as the Proton acceptor in catalysis. Residues 81–82 (GH), Asp241, and 246–247 (GS) contribute to the substrate site.

Belongs to the proline racemase family. In terms of assembly, homodimer.

The catalysed reaction is trans-3-hydroxy-L-proline = 1-pyrroline-2-carboxylate + H2O. Its function is as follows. Catalyzes the dehydration of trans-3-hydroxy-L-proline to delta-1-pyrroline-2-carboxylate (Pyr2C). The polypeptide is Trans-L-3-hydroxyproline dehydratase (l3hypdh) (Saccoglossus kowalevskii (Acorn worm)).